The primary structure comprises 559 residues: Malate synthase, glyoxysomal (559 aa).

Catalysis depends on R173, which acts as the Proton acceptor. D459 serves as the catalytic Proton donor. The Microbody targeting signal signature appears at C557–L559.

The protein belongs to the malate synthase family.

The protein resides in the glyoxysome. The enzyme catalyses glyoxylate + acetyl-CoA + H2O = (S)-malate + CoA + H(+). It participates in carbohydrate metabolism; glyoxylate cycle; (S)-malate from isocitrate: step 2/2. The sequence is that of Malate synthase, glyoxysomal (LIP) from Zea mays (Maize).